The following is a 473-amino-acid chain: Cysteine--tRNA ligase (473 aa).

C27 contacts Zn(2+). Positions 29-39 (ITPYDHMHVGH) match the 'HIGH' region motif. Positions 213, 238, and 242 each coordinate Zn(2+). Positions 271-275 (KMSKS) match the 'KMSKS' region motif. K274 provides a ligand contact to ATP.

It belongs to the class-I aminoacyl-tRNA synthetase family. Zn(2+) is required as a cofactor.

The protein localises to the cytoplasm. The catalysed reaction is tRNA(Cys) + L-cysteine + ATP = L-cysteinyl-tRNA(Cys) + AMP + diphosphate. The sequence is that of Cysteine--tRNA ligase from Pyrobaculum islandicum (strain DSM 4184 / JCM 9189 / GEO3).